We begin with the raw amino-acid sequence, 236 residues long: MALPAGPADAICALCQRAPREPVRADCGHRFCRACVVRFWAEEDGPFPCPECADDCWQRAVEPSRPPLSRRLLALEEAAAAPARDGPASEAALQLLCRADGDPLCSACRMAAGPEPPEWEPRWRKALRGKENKGSVEIMRKDLNDARDLHGQAESAAAVWKGHVMDRRKKALTDYKKLRAFFVEEEEHFLQEAEKDEGASEDDELADPADRFRSLLQAVSELEKKHRNLGLSMLLQ.

The segment at 12 to 53 (CALCQRAPREPVRADCGHRFCRACVVRFWAEEDGPFPCPECA) adopts an RING-type zinc-finger fold. Arg98 and Arg109 each carry asymmetric dimethylarginine; by PRMT1. A Glycyl lysine isopeptide (Lys-Gly) (interchain with G-Cter in ubiquitin) cross-link involves residue Lys195. Position 200 is a phosphoserine (Ser200). Glycyl lysine isopeptide (Lys-Gly) (interchain with G-Cter in ubiquitin) cross-links involve residues Lys224 and Lys225.

Homodimer. Interacts with JUN, independently of JUN phosphorylation. Interacts (via C-terminus) with TRIM7. Ubiquitinated; undergoes 'Lys-48'-linked autoubiquitination in the absence of growth factors and MAP3K1-induced 'Lys-63'-linked polyubiquitination. 'Lys-48'-autoubiquitination leads to degradation by the proteasome, while MAP3K1-induced 'Lys-63'-linked polyubiquitination results in the stabilization of the protein. 'Lys-48'- and 'Lys-63'-linked polyubiquitinations occur most probably on the same 3 C-terminal lysine residues (Lys-195, Lys-224 and Lys-225) and are thus mutually exclusive. Other sites of ubiquitination are not excluded. 'Lys-63'-linked polyubiquitination by TRIM7 in response to growth factor signaling via the MEK/ERK pathway enhances protein stability. Post-translationally, arginine methylation by PRMT1 stabilizes RNF187 by facilitating K63-linked ubiquitin chain formation, and enables dimerization, c-Jun interaction and subsequent AP1 target gene expression.

Its subcellular location is the cytoplasm. The protein resides in the nucleus. The enzyme catalyses S-ubiquitinyl-[E2 ubiquitin-conjugating enzyme]-L-cysteine + [acceptor protein]-L-lysine = [E2 ubiquitin-conjugating enzyme]-L-cysteine + N(6)-ubiquitinyl-[acceptor protein]-L-lysine.. The protein operates within protein modification; protein ubiquitination. Functionally, E3 ubiquitin-protein ligase that acts as a coactivator of JUN-mediated gene activation in response to growth factor signaling via the MAP3K1 pathway, independently from MAPK8. The protein is E3 ubiquitin-protein ligase RNF187 (Rnf187) of Mus musculus (Mouse).